The primary structure comprises 412 residues: Cathepsin D (412 aa).

The signal sequence occupies residues 1–20; sequence MQPSSLLPLALCLLAAPASA. Residues 21-64 constitute a propeptide, activation peptide; sequence LVRIPLHKFTSIRRTMSEVGGSVEDLIAKGPVSKYSQAVPAVTE. An O-linked (GalNAc...) threonine glycan is attached at threonine 63. Residues 79–407 form the Peptidase A1 domain; it reads YYGEIGIGTP…DRDNNRVGFA (329 aa). 2 cysteine pairs are disulfide-bonded: cysteine 91–cysteine 160 and cysteine 110–cysteine 117. Residue aspartate 97 is part of the active site. Asparagine 134 and asparagine 263 each carry an N-linked (GlcNAc...) asparagine glycan. Cysteine 286 and cysteine 290 form a disulfide bridge. Aspartate 295 is an active-site residue. A disulfide bridge connects residues cysteine 329 and cysteine 366.

It belongs to the peptidase A1 family. Consists of a light chain and a heavy chain. Interacts with ADAM30; this leads to activation of CTSD. Interacts with GRN; stabilizes CTSD; increases its proteolytic activity. In terms of processing, N- and O-glycosylated. Post-translationally, undergoes proteolytic cleavage and activation by ADAM30. As well as the major heavy chain which starts at Leu-169, 2 minor forms starting at Gly-170 and Gly-171 have been identified. An additional form starting at Ala-168 has also been identified. As to expression, expressed in the aorta extracellular space (at protein level). Expressed in liver (at protein level).

The protein localises to the lysosome. The protein resides in the melanosome. It localises to the secreted. It is found in the extracellular space. It catalyses the reaction Specificity similar to, but narrower than, that of pepsin A. Does not cleave the 4-Gln-|-His-5 bond in B chain of insulin.. Acid protease active in intracellular protein breakdown. Plays a role in APP processing following cleavage and activation by ADAM30 which leads to APP degradation. Involved in the pathogenesis of several diseases such as breast cancer and possibly Alzheimer disease. This Homo sapiens (Human) protein is Cathepsin D (CTSD).